The primary structure comprises 97 residues: UPF0235 protein APP7_1431 (97 aa).

It belongs to the UPF0235 family.

The polypeptide is UPF0235 protein APP7_1431 (Actinobacillus pleuropneumoniae serotype 7 (strain AP76)).